The chain runs to 514 residues: Double-stranded RNA-binding protein 6 (514 aa).

2 consecutive DRBM domains span residues M1–R70 and V87–Q155. Disordered stretches follow at residues N195–P268 and E455–H496. Composition is skewed to polar residues over residues F216–S225, A249–P263, and S473–T484.

Functionally, binds double-stranded RNA. This chain is Double-stranded RNA-binding protein 6 (DRB6), found in Oryza sativa subsp. japonica (Rice).